Reading from the N-terminus, the 191-residue chain is Imidazoleglycerol-phosphate dehydratase (191 aa).

Belongs to the imidazoleglycerol-phosphate dehydratase family.

The protein resides in the cytoplasm. The catalysed reaction is D-erythro-1-(imidazol-4-yl)glycerol 3-phosphate = 3-(imidazol-4-yl)-2-oxopropyl phosphate + H2O. It functions in the pathway amino-acid biosynthesis; L-histidine biosynthesis; L-histidine from 5-phospho-alpha-D-ribose 1-diphosphate: step 6/9. This is Imidazoleglycerol-phosphate dehydratase from Methanosarcina barkeri (strain Fusaro / DSM 804).